The following is a 327-amino-acid chain: MAAVLEVEIGGEAVREAAGEEVDLSELAPEERWRVEHARMHAKHRGHEAMHAEMVLILIATLVVAQLLLVQWKQRHQRSYNMVTLFQMWIVPVYFTVKLHWWRFLGIWFLFSIVTAFVTYKATRKPLVQTTPRLVYKWFLLLYKMSYATGIVGYIAVMFTLFGLNLLFRIKPEDAMDFGISLLFYGLYYGVLGRDFAEMCADYMASTIGFYSASGMPTKHLSDSVCAVCGQQIFVDVNEEGIIENTYRLSCNHVFHEFCIRGWCIVGKKQTCPYCKEKVDLKRMFSNPWERPHVMYGQLLDWLRYLVAWQPVIIGLVQGINYCLGLE.

Transmembrane regions (helical) follow at residues 50 to 70, 79 to 96, 99 to 119, 148 to 168, and 173 to 193; these read MHAE…LLLV, SYNM…VYFT, LHWW…AFVT, ATGI…NLLF, and EDAM…GVLG. The RING-type; atypical zinc-finger motif lies at 226 to 276; that stretch reads CAVCGQQIFVDVNEEGIIENTYRLSCNHVFHEFCIRGWCIVGKKQTCPYCK.

The protein belongs to the RNF121 family.

Its subcellular location is the endoplasmic reticulum membrane. It catalyses the reaction S-ubiquitinyl-[E2 ubiquitin-conjugating enzyme]-L-cysteine + [acceptor protein]-L-lysine = [E2 ubiquitin-conjugating enzyme]-L-cysteine + N(6)-ubiquitinyl-[acceptor protein]-L-lysine.. Its pathway is protein modification; protein ubiquitination. Its function is as follows. E3 ubiquitin ligase which accepts ubiquitin and transfers it to substrates thereby promoting their degradation by the endoplasmic reticulum-associated degradation (ERAD) pathway which is a pathway involved in ubiquitin-dependent degradation of misfolded endoplasmic reticulum proteins. May regulate the unfolded protein response to reduce endoplasmic reticulum stress. The protein is E3 ubiquitin ligase Rnf121 (rnf121) of Xenopus tropicalis (Western clawed frog).